The following is a 212-amino-acid chain: Glycerol-3-phosphate acyltransferase (212 aa).

Transmembrane regions (helical) follow at residues Ile-3–Ser-23, Lys-51–Ala-71, Asp-78–Phe-98, Ala-115–Phe-135, and Ser-139–Thr-159.

It belongs to the PlsY family. As to quaternary structure, probably interacts with PlsX.

It localises to the cell inner membrane. It catalyses the reaction an acyl phosphate + sn-glycerol 3-phosphate = a 1-acyl-sn-glycero-3-phosphate + phosphate. It participates in lipid metabolism; phospholipid metabolism. Its function is as follows. Catalyzes the transfer of an acyl group from acyl-phosphate (acyl-PO(4)) to glycerol-3-phosphate (G3P) to form lysophosphatidic acid (LPA). This enzyme utilizes acyl-phosphate as fatty acyl donor, but not acyl-CoA or acyl-ACP. The sequence is that of Glycerol-3-phosphate acyltransferase from Burkholderia vietnamiensis (strain G4 / LMG 22486) (Burkholderia cepacia (strain R1808)).